The chain runs to 226 residues: MPEVKRLSDGIFEVIKDKKQLATKNLDPGKTVYGEKLIAVEGVEYRTWDPRRSKLGAMVLKKFNIPLTKNSKVLYLGAASGTTVSHVSDIVSEGAVYAVEFAPRSMRDLIGLASRRKNIHPILADAGKPDSYSHLVEPVDLIFQDVAQPNQAEIAARNAVRFLKREGYLLLSIKARSIDTVAKPKEVFKAEVKKLEQAFEPRFEILNAKDLMPYHEDHLGVLAKLK.

Residues 82–83, 100–101, 125–126, and 145–148 contribute to the S-adenosyl-L-methionine site; these read TT, EF, DA, and DVAQ.

This sequence belongs to the methyltransferase superfamily. Fibrillarin family. As to quaternary structure, interacts with nop5. Component of box C/D small ribonucleoprotein (sRNP) particles that contain rpl7ae, FlpA and nop5, plus a guide RNA.

Functionally, involved in pre-rRNA and tRNA processing. Utilizes the methyl donor S-adenosyl-L-methionine to catalyze the site-specific 2'-hydroxyl methylation of ribose moieties in rRNA and tRNA. Site specificity is provided by a guide RNA that base pairs with the substrate. Methylation occurs at a characteristic distance from the sequence involved in base pairing with the guide RNA. This chain is Fibrillarin-like rRNA/tRNA 2'-O-methyltransferase, found in Methanosarcina barkeri (strain Fusaro / DSM 804).